The chain runs to 124 residues: Small ribosomal subunit protein uS12 (124 aa).

Aspartate 89 carries the 3-methylthioaspartic acid modification. The interval 105–124 is disordered; it reads QGVKNRKQARSRYGAKKEKS. Positions 108-118 are enriched in basic residues; the sequence is KNRKQARSRYG.

Belongs to the universal ribosomal protein uS12 family. In terms of assembly, part of the 30S ribosomal subunit. Contacts proteins S8 and S17. May interact with IF1 in the 30S initiation complex.

In terms of biological role, with S4 and S5 plays an important role in translational accuracy. Functionally, interacts with and stabilizes bases of the 16S rRNA that are involved in tRNA selection in the A site and with the mRNA backbone. Located at the interface of the 30S and 50S subunits, it traverses the body of the 30S subunit contacting proteins on the other side and probably holding the rRNA structure together. The combined cluster of proteins S8, S12 and S17 appears to hold together the shoulder and platform of the 30S subunit. In Mycolicibacterium smegmatis (strain ATCC 700084 / mc(2)155) (Mycobacterium smegmatis), this protein is Small ribosomal subunit protein uS12 (rpsL).